Here is a 953-residue protein sequence, read N- to C-terminus: Nucleotide-binding oligomerization domain-containing protein 1 (953 aa).

Positions 15–105 constitute a CARD domain; that stretch reads ESHPHIQLLK…AYVDLRPWLL (91 aa). In terms of domain architecture, NACHT spans 196-531; that stretch reads ETIFILGDAG…AFFTAFFLVL (336 aa). 202 to 209 contributes to the ATP binding site; it reads GDAGVGKS. 2 S-palmitoyl cysteine lipidation sites follow: C558 and C567. LRR repeat units follow at residues 632–656, 702–725, 727–750, 755–778, 783–806, 839–862, 867–891, 895–918, and 923–946; these read LKSL…IWML, FPKR…ELQP, FSRL…VLSE, YKIV…YVTK, CKGL…YLAL, HPSL…SLAR, NTSL…LAEM, NQTL…QLAD, and NTGI…VYED. A lipid anchor (S-palmitoyl cysteine) is attached at C952.

The protein belongs to the NOD1-NOD2 family. Homooligomer: homooligomerizes following ligand-binding, promoting RIPK2 recruitment. Interacts (via CARD domain) with RIPK2 (via CARD domain). Following RIPK2 recruitment, RIPK2 homooligomerizes via its CARD domain and forms long filaments named RIPosomes. Interacts with ARHGEF2. Interacts (via CARD domain) with ubiquitin; inhibiting interaction with RIPK2. Interacts with NLRP10 and recruits it to the cell membrane following invasive bacterial infection. Interacts with IFIH1; this interaction promotes transcription of antiviral genes and inhibition of viral replication. Interacts with IRGM; promoting NOD1 degradation. Interacts with ATG16L1. In terms of processing, palmitoylated. Palmitoylation is required for proper recruitment to the bacterial entry site and hence for proper signaling upon cognate peptidoglycan detection. Post-translationally, ubiquitinated. 'Lys-48'-linked polyubiquitination by RNF34 promotes proteasomal degradation and thereby negatively regulates NOD1 for instance in NF-kappa-B activation. Degraded via selective autophagy following interaction with IRGM. IRGM promotes NOD1-RIPK2 RIPosome recruitment to autophagosome membranes, promoting their SQSTM1/p62-dependent autophagic degradation. In terms of tissue distribution, highly expressed in adult heart, skeletal muscle, pancreas, spleen and ovary. Also detected in placenta, lung, liver, kidney, thymus, testis, small intestine and colon.

It is found in the cell membrane. It localises to the apical cell membrane. The protein resides in the basolateral cell membrane. Its subcellular location is the cytoplasm. Functionally, pattern recognition receptor (PRR) that detects bacterial peptidoglycan fragments and other danger signals and thus participates in both innate and adaptive immune responses. Specifically recognizes and binds gamma-D-glutamyl-meso-diaminopimelic acid (iE-DAP), a dipeptide present in peptidoglycan of Gram-negative bacteria. Preferentially binds iE-DAP in tripeptide-containing muropeptides (MurNAc-TriDAP or TriDAP). Ligand binding triggers oligomerization that facilitates the binding and subsequent activation of the proximal adapter receptor-interacting RIPK2. Following recruitment, RIPK2 undergoes 'Met-1'- (linear) and 'Lys-63'-linked polyubiquitination by E3 ubiquitin-protein ligases XIAP, BIRC2, BIRC3 and the LUBAC complex, becoming a scaffolding protein for downstream effectors, triggering activation of the NF-kappa-B and MAP kinases signaling. This in turn leads to the transcriptional activation of hundreds of genes involved in immune response. Also acts as a regulator of antiviral response elicited by dsRNA and the expression of RLR pathway members by targeting IFIH1 and TRAF3 to modulate the formation of IFIH1-MAVS and TRAF3-MAVS complexes leading to increased transcription of type I IFNs. Also acts as a regulator of autophagy via its interaction with ATG16L1, possibly by recruiting ATG16L1 at the site of bacterial entry. Besides recognizing pathogens, also involved in the endoplasmic reticulum stress response: acts by sensing and binding to the cytosolic metabolite sphingosine-1-phosphate generated in response to endoplasmic reticulum stress, initiating an inflammation process that leads to activation of the NF-kappa-B and MAP kinases signaling. In addition, plays a role in insulin trafficking in beta cells in a cell-autonomous manner. Mechanistically, upon recognizing cognate ligands, NOD1 and RIPK2 localize to insulin vesicles where they recruit RAB1A to direct insulin trafficking through the cytoplasm. In contrast to isoform 1, does not efficiently recognize and bind gamma-D-glutamyl-meso-diaminopimelic acid (iE-DAP) ligand. The sequence is that of Nucleotide-binding oligomerization domain-containing protein 1 from Homo sapiens (Human).